The sequence spans 292 residues: Glycine--tRNA ligase alpha subunit (292 aa).

This sequence belongs to the class-II aminoacyl-tRNA synthetase family. Tetramer of two alpha and two beta subunits.

It is found in the cytoplasm. The enzyme catalyses tRNA(Gly) + glycine + ATP = glycyl-tRNA(Gly) + AMP + diphosphate. The chain is Glycine--tRNA ligase alpha subunit from Synechococcus elongatus (strain ATCC 33912 / PCC 7942 / FACHB-805) (Anacystis nidulans R2).